Here is a 524-residue protein sequence, read N- to C-terminus: Bifunctional purine biosynthesis protein PurH (524 aa).

Positions 1 to 145 constitute an MGS-like domain; it reads MIQQALLSVS…KNHRDVTVIV (145 aa).

This sequence belongs to the PurH family.

It catalyses the reaction (6R)-10-formyltetrahydrofolate + 5-amino-1-(5-phospho-beta-D-ribosyl)imidazole-4-carboxamide = 5-formamido-1-(5-phospho-D-ribosyl)imidazole-4-carboxamide + (6S)-5,6,7,8-tetrahydrofolate. It carries out the reaction IMP + H2O = 5-formamido-1-(5-phospho-D-ribosyl)imidazole-4-carboxamide. It functions in the pathway purine metabolism; IMP biosynthesis via de novo pathway; 5-formamido-1-(5-phospho-D-ribosyl)imidazole-4-carboxamide from 5-amino-1-(5-phospho-D-ribosyl)imidazole-4-carboxamide (10-formyl THF route): step 1/1. Its pathway is purine metabolism; IMP biosynthesis via de novo pathway; IMP from 5-formamido-1-(5-phospho-D-ribosyl)imidazole-4-carboxamide: step 1/1. The sequence is that of Bifunctional purine biosynthesis protein PurH from Ralstonia nicotianae (strain ATCC BAA-1114 / GMI1000) (Ralstonia solanacearum).